The chain runs to 325 residues: Tetraacyldisaccharide 4'-kinase (325 aa).

Position 55-62 (55-62 (TAGGNGKT)) interacts with ATP.

Belongs to the LpxK family.

It catalyses the reaction a lipid A disaccharide + ATP = a lipid IVA + ADP + H(+). It functions in the pathway glycolipid biosynthesis; lipid IV(A) biosynthesis; lipid IV(A) from (3R)-3-hydroxytetradecanoyl-[acyl-carrier-protein] and UDP-N-acetyl-alpha-D-glucosamine: step 6/6. Transfers the gamma-phosphate of ATP to the 4'-position of a tetraacyldisaccharide 1-phosphate intermediate (termed DS-1-P) to form tetraacyldisaccharide 1,4'-bis-phosphate (lipid IVA). The chain is Tetraacyldisaccharide 4'-kinase from Salmonella choleraesuis (strain SC-B67).